Reading from the N-terminus, the 265-residue chain is Lipopolysaccharide core heptose(I) kinase WaaP (265 aa).

The active site involves Asp-162.

It belongs to the protein kinase superfamily. KdkA/RfaP family. It depends on Mg(2+) as a cofactor.

The protein localises to the cell inner membrane. It carries out the reaction an L-alpha-D-Hep-(1-&gt;3)-L-alpha-D-Hep-(1-&gt;5)-[alpha-Kdo-(2-&gt;4)]-alpha-Kdo-(2-&gt;6)-lipid A + ATP = an L-alpha-D-Hep-(1-&gt;3)-4-O-phospho-L-alpha-D-Hep-(1-&gt;5)-[alpha-Kdo-(2-&gt;4)]-alpha-Kdo-(2-&gt;6)-lipid A + ADP + H(+). The enzyme catalyses L-alpha-D-Hep-(1-&gt;3)-L-alpha-D-Hep-(1-&gt;5)-[alpha-Kdo-(2-&gt;4)]-alpha-Kdo-(2-&gt;6)-lipid A (E. coli) + ATP = L-alpha-D-Hep-(1-&gt;3)-4-O-phospho-L-alpha-D-Hep-(1-&gt;5)-[alpha-Kdo-(2-&gt;4)]-alpha-Kdo-(2-&gt;6)-lipid A (E. coli) + ADP + H(+). It functions in the pathway bacterial outer membrane biogenesis; LPS core biosynthesis. Kinase involved in the biosynthesis of the core oligosaccharide region of lipopolysaccharide (LPS). Catalyzes the phosphorylation of heptose I (HepI), the first heptose added to the Kdo2-lipid A module. In Escherichia coli, this protein is Lipopolysaccharide core heptose(I) kinase WaaP.